The primary structure comprises 96 residues: Teretoxin Tan6.14 (96 aa).

The first 21 residues, 1–21 (MRPLLVFVLMVSVSLAFSLEG), serve as a signal peptide directing secretion. The propeptide occupies 22–60 (MPNNGGDSVASITANQARRFKRNPLFSFAQHSLVDLKAR).

In terms of processing, contains 3 disulfide bonds. Expressed by the venom duct.

It localises to the secreted. The protein is Teretoxin Tan6.14 of Terebra anilis (Auger snail).